Here is a 284-residue protein sequence, read N- to C-terminus: MTAQLIDGKAIAANLRQQIAQRVTERRQQGLRVPGLAVILVGTDPASQVYVAHKRKDCEEVGFLSQAYDLPADTSQDELLALIDRLNDDPAIDGILVQLPLPAHLDASLLLERIHPDKDVDGFHPYNIGRLAQRMPLLRPCTPKGIMTLLASTGADLYGMDAVVVGASNIVGRPMALELLLGGCTVTVTHRFTRDLAAHVSRADLVVVAAGKPGLVKGEWIKEGAIVIDVGINRQADGRLVGDVEYDVAARRASWITPVPGGVGPMTRACLLENTLHAAEHLHD.

NADP(+) contacts are provided by residues 166 to 168 (GAS) and isoleucine 232.

Belongs to the tetrahydrofolate dehydrogenase/cyclohydrolase family. Homodimer.

The enzyme catalyses (6R)-5,10-methylene-5,6,7,8-tetrahydrofolate + NADP(+) = (6R)-5,10-methenyltetrahydrofolate + NADPH. It catalyses the reaction (6R)-5,10-methenyltetrahydrofolate + H2O = (6R)-10-formyltetrahydrofolate + H(+). The protein operates within one-carbon metabolism; tetrahydrofolate interconversion. Functionally, catalyzes the oxidation of 5,10-methylenetetrahydrofolate to 5,10-methenyltetrahydrofolate and then the hydrolysis of 5,10-methenyltetrahydrofolate to 10-formyltetrahydrofolate. The protein is Bifunctional protein FolD of Pseudomonas paraeruginosa (strain DSM 24068 / PA7) (Pseudomonas aeruginosa (strain PA7)).